We begin with the raw amino-acid sequence, 306 residues long: Aspartate carbamoyltransferase catalytic subunit (306 aa).

Arg-55 and Thr-56 together coordinate carbamoyl phosphate. L-aspartate is bound at residue Lys-85. Carbamoyl phosphate is bound by residues Arg-106, His-133, and Gln-136. Positions 166 and 228 each coordinate L-aspartate. Positions 264 and 265 each coordinate carbamoyl phosphate.

This sequence belongs to the aspartate/ornithine carbamoyltransferase superfamily. ATCase family. In terms of assembly, heterododecamer (2C3:3R2) of six catalytic PyrB chains organized as two trimers (C3), and six regulatory PyrI chains organized as three dimers (R2).

The enzyme catalyses carbamoyl phosphate + L-aspartate = N-carbamoyl-L-aspartate + phosphate + H(+). It participates in pyrimidine metabolism; UMP biosynthesis via de novo pathway; (S)-dihydroorotate from bicarbonate: step 2/3. Catalyzes the condensation of carbamoyl phosphate and aspartate to form carbamoyl aspartate and inorganic phosphate, the committed step in the de novo pyrimidine nucleotide biosynthesis pathway. This Serratia marcescens protein is Aspartate carbamoyltransferase catalytic subunit.